The following is a 114-amino-acid chain: Mediator of RNA polymerase II transcription subunit 11 (114 aa).

Residues 28 to 61 (LELSKEKANASLLDRQLNQFQTSINRVESELSSQ) are a coiled coil.

Belongs to the Mediator complex subunit 11 family. In terms of assembly, component of the Mediator complex. As to expression, ubiquitously expressed at early stage of development. After fertilization expressed in head region as well as in lateral line primordium.

The protein resides in the nucleus. Functionally, component of the Mediator complex, a coactivator involved in the regulated transcription of nearly all RNA polymerase II-dependent genes. Mediator functions as a bridge to convey information from gene-specific regulatory proteins to the basal RNA polymerase II transcription machinery. Mediator is recruited to promoters by direct interactions with regulatory proteins and serves as a scaffold for the assembly of a functional pre-initiation complex with RNA polymerase II and the general transcription factors. The polypeptide is Mediator of RNA polymerase II transcription subunit 11 (med11) (Danio rerio (Zebrafish)).